We begin with the raw amino-acid sequence, 87 residues long: Small ribosomal subunit protein bS20 (87 aa).

The disordered stretch occupies residues 1–26 (MANIKSAKKRAVQSEKARKHNASRRS).

This sequence belongs to the bacterial ribosomal protein bS20 family.

In terms of biological role, binds directly to 16S ribosomal RNA. The chain is Small ribosomal subunit protein bS20 from Salmonella gallinarum (strain 287/91 / NCTC 13346).